The chain runs to 873 residues: Protein SEY1 (873 aa).

The segment at 1 to 21 is disordered; that stretch reads MVANGHFAGSADGQDSSSYEH. At 1–749 the chain is on the cytoplasmic side; that stretch reads MVANGHFAGS…KRSAIGGITQ (749 aa). Positions 49-307 constitute a GB1/RHD3-type G domain; it reads GFNYHLISVF…IPADGFAVYA (259 aa). 59-66 contacts GTP; the sequence is GSQSTGKS. A coiled-coil region spans residues 482–506; that stretch reads SNYQQELSLYQKDLERTSGQLRRDE. Residues 676–703 form a disordered region; that stretch reads LDKWIGHTPSSATPADEEDLTPIGGVDD. The segment covering 690-703 has biased composition (acidic residues); it reads ADEEDLTPIGGVDD. Residues 750–770 traverse the membrane as a helical segment; that stretch reads VPLYFYGLLFALGWNEILAVL. Residues 771–773 lie on the Lumenal side of the membrane; that stretch reads RNP. A helical transmembrane segment spans residues 774–794; it reads VYFLLLFVCAIGAYITYQLNL. Residues 795-873 are Cytoplasmic-facing; that stretch reads WGPIIKMTEA…EDVDDDDDDF (79 aa). Positions 828-873 are disordered; sequence RQAMAMSGARNATEEHEMSRLSRKPAERGGRKNRADEDVDDDDDDF. Residues 839–863 are compositionally biased toward basic and acidic residues; it reads ATEEHEMSRLSRKPAERGGRKNRAD. Residues 864–873 are compositionally biased toward acidic residues; that stretch reads EDVDDDDDDF.

The protein belongs to the TRAFAC class dynamin-like GTPase superfamily. GB1/RHD3 GTPase family. RHD3 subfamily.

The protein resides in the endoplasmic reticulum membrane. In terms of biological role, cooperates with the reticulon proteins and tubule-shaping DP1 family proteins to generate and maintain the structure of the tubular endoplasmic reticulum network. Has GTPase activity, which is required for its function in ER organization. The chain is Protein SEY1 from Ajellomyces capsulatus (strain G186AR / H82 / ATCC MYA-2454 / RMSCC 2432) (Darling's disease fungus).